The primary structure comprises 212 residues: Cytidylate kinase (212 aa).

Position 11 to 19 (11 to 19 (GPAASGKGT)) interacts with ATP. Residues 50–69 (GGDPADPAASEEQARSLSRL) are disordered.

It belongs to the cytidylate kinase family. Type 1 subfamily.

Its subcellular location is the cytoplasm. It carries out the reaction CMP + ATP = CDP + ADP. It catalyses the reaction dCMP + ATP = dCDP + ADP. The protein is Cytidylate kinase of Acidiphilium cryptum (strain JF-5).